We begin with the raw amino-acid sequence, 216 residues long: Protein-L-isoaspartate O-methyltransferase (216 aa).

S66 is an active-site residue.

The protein belongs to the methyltransferase superfamily. L-isoaspartyl/D-aspartyl protein methyltransferase family.

The protein resides in the cytoplasm. The catalysed reaction is [protein]-L-isoaspartate + S-adenosyl-L-methionine = [protein]-L-isoaspartate alpha-methyl ester + S-adenosyl-L-homocysteine. Catalyzes the methyl esterification of L-isoaspartyl residues in peptides and proteins that result from spontaneous decomposition of normal L-aspartyl and L-asparaginyl residues. It plays a role in the repair and/or degradation of damaged proteins. This Colwellia psychrerythraea (strain 34H / ATCC BAA-681) (Vibrio psychroerythus) protein is Protein-L-isoaspartate O-methyltransferase.